The sequence spans 657 residues: uncharacterized protein (657 aa).

Residues 1-17 (MACVLACVAVLIGAASA) form the signal peptide.

This is an uncharacterized protein from Orgyia pseudotsugata (Douglas-fir tussock moth).